The sequence spans 218 residues: Hsp70 nucleotide exchange factor fes1 (218 aa).

3 ARM repeats span residues 26–67, 86–125, and 128–168; these read NNNA…SDEV, IDNA…TAVQ, and EKAQ…SAVR.

This sequence belongs to the FES1 family.

The protein localises to the cytoplasm. Functions as a nucleotide exchange factor (NEF) for Hsp70 chaperones which accelerates the release of ADP. Required for fully efficient Hsp70-mediated folding of proteins. In Emericella nidulans (strain FGSC A4 / ATCC 38163 / CBS 112.46 / NRRL 194 / M139) (Aspergillus nidulans), this protein is Hsp70 nucleotide exchange factor fes1 (fes1).